The primary structure comprises 209 residues: N-(5'-phosphoribosyl)anthranilate isomerase (209 aa).

Belongs to the TrpF family.

The enzyme catalyses N-(5-phospho-beta-D-ribosyl)anthranilate = 1-(2-carboxyphenylamino)-1-deoxy-D-ribulose 5-phosphate. It participates in amino-acid biosynthesis; L-tryptophan biosynthesis; L-tryptophan from chorismate: step 3/5. This is N-(5'-phosphoribosyl)anthranilate isomerase from Erythrobacter litoralis (strain HTCC2594).